The chain runs to 227 residues: Max dimerization protein 1 (227 aa).

The Nuclear localization signal signature appears at 21-48 (RREREAEHGYASMLPYSKDRDAFKRRNK). Disordered stretches follow at residues 30–66 (YASM…MEKN), 142–161 (MDSV…REEL), and 184–227 (GWSS…GLGL). The bHLH domain occupies 55-107 (SSRSTHNEMEKNRRAHLRLCLEKLKGLVPLGPESSRHTTLSLLTKAKLHIKKL). A compositionally biased stretch (polar residues) spans 198 to 211 (MQSLGSDEGYSSAT). Residues 216–227 (KLQDGHKAGLGL) show a composition bias toward basic and acidic residues.

In terms of assembly, heterodimer with MAX; the interaction is required for DNA-binding. DNA binding requires dimerization with another bHLH protein; does not form homodimers, and does not bind to DNA in the absence of MAX in vitro. Interacts with RNF17. Post-translationally, ubiquitinated by BIRC2/c-IAP1, leading to its subsequent degradation by the proteasome.

The protein localises to the nucleus. Component of a transcriptional repressor complex together with MAX. In complex with MAX binds to the core DNA sequence 5'-CAC[GA]TG-3'. Antagonizes MYC transcriptional activity by competing with MYC for MAX binding. Binds to the TERT promoter and represses telomerase expression, possibly by interfering with MYC binding. This is Max dimerization protein 1 (Mxd1) from Mus musculus (Mouse).